The following is a 242-amino-acid chain: DNA repair protein RecO (242 aa).

Belongs to the RecO family.

Involved in DNA repair and RecF pathway recombination. This is DNA repair protein RecO from Methylococcus capsulatus (strain ATCC 33009 / NCIMB 11132 / Bath).